The sequence spans 99 residues: Plastocyanin (99 aa).

The region spanning 1–99 (IEILLGGDDG…AGMVGKVTVN (99 aa)) is the Plastocyanin-like domain. The Cu cation site is built by His-37, Cys-84, His-87, and Met-92.

It belongs to the plastocyanin family. The cofactor is Cu(2+).

It is found in the plastid. The protein resides in the chloroplast thylakoid membrane. Functionally, participates in electron transfer between P700 and the cytochrome b6-f complex in photosystem I. In Cucumis sativus (Cucumber), this protein is Plastocyanin (PETE).